The primary structure comprises 150 residues: Globin-3 (150 aa).

Residues 11–150 (PLTAADKTKI…IICILLNSAY (140 aa)) enclose the Globin domain. The heme b site is built by H74 and H106.

It belongs to the globin family. Monomer.

The chain is Globin-3 from Mordacia mordax (Southern hemisphere lamprey).